The following is a 202-amino-acid chain: MGQDTITKQHSLIFLTGFSGSGKSTIGPLLANSLGYEFLDVDQAVEQRAGKPITRIFAEEGEAAFRELELQTLKTVAGEKEMVVSLGGGALQYDPSHAFIAGAGTLVYLKSSAANLAKRLVNKRDRPLLRGENGRKHSREELEEKIRRILEEREPRYQQAALTVQTDQKRIGSTVEELTRKIERLVRKAPQIGEDGQQPEQP.

ATP is bound at residue 20–25 (GSGKST). S24 provides a ligand contact to Mg(2+). 3 residues coordinate substrate: D42, R66, and G88. R126 is an ATP binding site. R153 is a binding site for substrate.

This sequence belongs to the shikimate kinase family. As to quaternary structure, monomer. Requires Mg(2+) as cofactor.

The protein resides in the cytoplasm. It carries out the reaction shikimate + ATP = 3-phosphoshikimate + ADP + H(+). Its pathway is metabolic intermediate biosynthesis; chorismate biosynthesis; chorismate from D-erythrose 4-phosphate and phosphoenolpyruvate: step 5/7. In terms of biological role, catalyzes the specific phosphorylation of the 3-hydroxyl group of shikimic acid using ATP as a cosubstrate. The protein is Shikimate kinase of Chlorobium luteolum (strain DSM 273 / BCRC 81028 / 2530) (Pelodictyon luteolum).